The sequence spans 287 residues: Uricase (287 aa).

Catalysis depends on charge relay system residues Lys-11 and Thr-58. Urate contacts are provided by Thr-58, Asp-59, Phe-160, Arg-177, Val-219, Gln-220, and Asn-246. Residue His-248 is the Charge relay system of the active site. Residues 285-287 (SRL) carry the Microbody targeting signal motif.

The protein belongs to the uricase family.

It is found in the peroxisome. It carries out the reaction urate + O2 + H2O = 5-hydroxyisourate + H2O2. It functions in the pathway purine metabolism; urate degradation; (S)-allantoin from urate: step 1/3. Catalyzes the oxidation of uric acid to 5-hydroxyisourate, which is further processed to form (S)-allantoin. This chain is Uricase (uox), found in Dictyostelium discoideum (Social amoeba).